A 414-amino-acid chain; its full sequence is tRNA(Ile)-lysidine synthase (414 aa).

13-18 (SGGIDS) contributes to the ATP binding site.

Belongs to the tRNA(Ile)-lysidine synthase family.

The protein localises to the cytoplasm. It catalyses the reaction cytidine(34) in tRNA(Ile2) + L-lysine + ATP = lysidine(34) in tRNA(Ile2) + AMP + diphosphate + H(+). Ligates lysine onto the cytidine present at position 34 of the AUA codon-specific tRNA(Ile) that contains the anticodon CAU, in an ATP-dependent manner. Cytidine is converted to lysidine, thus changing the amino acid specificity of the tRNA from methionine to isoleucine. The polypeptide is tRNA(Ile)-lysidine synthase (Thermotoga sp. (strain RQ2)).